We begin with the raw amino-acid sequence, 426 residues long: Serine--tRNA ligase (426 aa).

The tract at residues 36–66 (KRRHLQERTQDLQSQRNTISKEIGQKKAKGE) is disordered. The segment covering 46–55 (DLQSQRNTIS) has biased composition (polar residues). L-serine is bound at residue 233–235 (TAE). 264–266 (RSE) serves as a coordination point for ATP. Glu-287 contacts L-serine. 351–354 (EISS) serves as a coordination point for ATP. L-serine is bound at residue Ser-387.

Belongs to the class-II aminoacyl-tRNA synthetase family. Type-1 seryl-tRNA synthetase subfamily. As to quaternary structure, homodimer. The tRNA molecule binds across the dimer.

The protein localises to the cytoplasm. The catalysed reaction is tRNA(Ser) + L-serine + ATP = L-seryl-tRNA(Ser) + AMP + diphosphate + H(+). It carries out the reaction tRNA(Sec) + L-serine + ATP = L-seryl-tRNA(Sec) + AMP + diphosphate + H(+). It functions in the pathway aminoacyl-tRNA biosynthesis; selenocysteinyl-tRNA(Sec) biosynthesis; L-seryl-tRNA(Sec) from L-serine and tRNA(Sec): step 1/1. Its function is as follows. Catalyzes the attachment of serine to tRNA(Ser). Is also able to aminoacylate tRNA(Sec) with serine, to form the misacylated tRNA L-seryl-tRNA(Sec), which will be further converted into selenocysteinyl-tRNA(Sec). The polypeptide is Serine--tRNA ligase (Francisella tularensis subsp. novicida (strain U112)).